The sequence spans 326 residues: N-acetyl-gamma-glutamyl-phosphate reductase (326 aa).

The active site involves Cys-155.

Belongs to the NAGSA dehydrogenase family. Type 1 subfamily.

The protein resides in the cytoplasm. The catalysed reaction is N-acetyl-L-glutamate 5-semialdehyde + phosphate + NADP(+) = N-acetyl-L-glutamyl 5-phosphate + NADPH + H(+). It participates in amino-acid biosynthesis; L-arginine biosynthesis; N(2)-acetyl-L-ornithine from L-glutamate: step 3/4. Its function is as follows. Catalyzes the NADPH-dependent reduction of N-acetyl-5-glutamyl phosphate to yield N-acetyl-L-glutamate 5-semialdehyde. The protein is N-acetyl-gamma-glutamyl-phosphate reductase of Shewanella woodyi (strain ATCC 51908 / MS32).